The following is a 229-amino-acid chain: Predicted GPI-anchored protein 19 (229 aa).

A signal peptide spans 1–20; the sequence is MFSTTSIVLWFTILLPVTLP. Positions 63–92 are disordered; that stretch reads DNEQVLRKSKKKKKTTSTGTPGNENTTDFA. Residues 81–92 are compositionally biased toward polar residues; sequence GTPGNENTTDFA. N87, N184, and N189 each carry an N-linked (GlcNAc...) asparagine glycan. The GPI-anchor amidated glycine moiety is linked to residue G208. A propeptide spans 209–229 (removed in mature form); that stretch reads FGSLIPYNSFYLYILLFCIIF.

Its subcellular location is the cell membrane. Functionally, predicted GPI-anchored protein which may have a role during host infection. This chain is Predicted GPI-anchored protein 19 (PGA19), found in Candida albicans (strain SC5314 / ATCC MYA-2876) (Yeast).